The following is a 252-amino-acid chain: MIKIVLNGCCGKMGKVITECASKFNDLQIVAGIDKFPYETSYPIFETPEDLNLDYDVLLDFSRAGALKGLLNLTEKTKKPLVICSTGFSDEDLALIEEKSKTLPLFRSANMSLGINLINSLLRKVTPLLYGNYDIEIIEKHHNQKVDSPSGTAVLLADTIKESINDETKFVYGRSGASKREENEIGIHAIRGGSIVGDHDVIFAGVGEVIELSHKAISREVFAIGALKACEYMGNISIPGLYTMDDVIGITK.

Residues 8–13, 84–86, and 108–111 contribute to the NAD(+) site; these read GCCGKM, CST, and SANM. Residue histidine 141 is the Proton donor/acceptor of the active site. Histidine 142 is a (S)-2,3,4,5-tetrahydrodipicolinate binding site. Lysine 145 serves as the catalytic Proton donor. 151 to 152 lines the (S)-2,3,4,5-tetrahydrodipicolinate pocket; the sequence is GT.

Belongs to the DapB family.

It localises to the cytoplasm. The enzyme catalyses (S)-2,3,4,5-tetrahydrodipicolinate + NAD(+) + H2O = (2S,4S)-4-hydroxy-2,3,4,5-tetrahydrodipicolinate + NADH + H(+). It carries out the reaction (S)-2,3,4,5-tetrahydrodipicolinate + NADP(+) + H2O = (2S,4S)-4-hydroxy-2,3,4,5-tetrahydrodipicolinate + NADPH + H(+). Its pathway is amino-acid biosynthesis; L-lysine biosynthesis via DAP pathway; (S)-tetrahydrodipicolinate from L-aspartate: step 4/4. Catalyzes the conversion of 4-hydroxy-tetrahydrodipicolinate (HTPA) to tetrahydrodipicolinate. The sequence is that of 4-hydroxy-tetrahydrodipicolinate reductase from Clostridium botulinum (strain Eklund 17B / Type B).